The primary structure comprises 326 residues: Probable cell division protein WhiA (326 aa).

Residues 275–308 constitute a DNA-binding region (H-T-H motif); sequence SLEELGQLAEPPMTKDAVAGRIRRLLAMADKRAR.

Belongs to the WhiA family.

Involved in cell division and chromosome segregation. This Saccharopolyspora erythraea (strain ATCC 11635 / DSM 40517 / JCM 4748 / NBRC 13426 / NCIMB 8594 / NRRL 2338) protein is Probable cell division protein WhiA.